A 190-amino-acid polypeptide reads, in one-letter code: 3-isopropylmalate dehydratase small subunit (190 aa).

The protein belongs to the LeuD family. LeuD type 1 subfamily. In terms of assembly, heterodimer of LeuC and LeuD.

The catalysed reaction is (2R,3S)-3-isopropylmalate = (2S)-2-isopropylmalate. It participates in amino-acid biosynthesis; L-leucine biosynthesis; L-leucine from 3-methyl-2-oxobutanoate: step 2/4. Catalyzes the isomerization between 2-isopropylmalate and 3-isopropylmalate, via the formation of 2-isopropylmaleate. The polypeptide is 3-isopropylmalate dehydratase small subunit (Staphylococcus aureus (strain JH1)).